Here is a 145-residue protein sequence, read N- to C-terminus: D-aminoacyl-tRNA deacylase (145 aa).

Residues 137-138 (GP) carry the Gly-cisPro motif, important for rejection of L-amino acids motif.

The protein belongs to the DTD family. In terms of assembly, homodimer.

Its subcellular location is the cytoplasm. It catalyses the reaction glycyl-tRNA(Ala) + H2O = tRNA(Ala) + glycine + H(+). The catalysed reaction is a D-aminoacyl-tRNA + H2O = a tRNA + a D-alpha-amino acid + H(+). Its function is as follows. An aminoacyl-tRNA editing enzyme that deacylates mischarged D-aminoacyl-tRNAs. Also deacylates mischarged glycyl-tRNA(Ala), protecting cells against glycine mischarging by AlaRS. Acts via tRNA-based rather than protein-based catalysis; rejects L-amino acids rather than detecting D-amino acids in the active site. By recycling D-aminoacyl-tRNA to D-amino acids and free tRNA molecules, this enzyme counteracts the toxicity associated with the formation of D-aminoacyl-tRNA entities in vivo and helps enforce protein L-homochirality. The sequence is that of D-aminoacyl-tRNA deacylase from Shewanella baltica (strain OS195).